The primary structure comprises 919 residues: Probable dipeptidyl-aminopeptidase B (919 aa).

The span at Met1 to Thr10 shows a compositional bias: basic and acidic residues. Residues Met1–Val50 are disordered. The Cytoplasmic portion of the chain corresponds to Met1–Arg92. The segment covering Ser21–Ser38 has biased composition (low complexity). The chain crosses the membrane as a helical; Signal-anchor for type II membrane protein span at residues Ile93–Leu113. Over Thr114–Pro919 the chain is Vacuolar. N-linked (GlcNAc...) asparagine glycosylation is found at Asn200, Asn352, and Asn643. The Charge relay system role is filled by Ser757. Asn811 carries an N-linked (GlcNAc...) asparagine glycan. Active-site charge relay system residues include Asp834 and His867.

The protein belongs to the peptidase S9B family.

It is found in the vacuole membrane. It catalyses the reaction Release of an N-terminal dipeptide, Xaa-Yaa-|-Zaa-, from a polypeptide, preferentially when Yaa is Pro, provided Zaa is neither Pro nor hydroxyproline.. Its function is as follows. Type IV dipeptidyl-peptidase which removes N-terminal dipeptides sequentially from polypeptides having unsubstituted N-termini provided that the penultimate residue is proline. In Neosartorya fischeri (strain ATCC 1020 / DSM 3700 / CBS 544.65 / FGSC A1164 / JCM 1740 / NRRL 181 / WB 181) (Aspergillus fischerianus), this protein is Probable dipeptidyl-aminopeptidase B (dapB).